A 726-amino-acid chain; its full sequence is MAIGQPFATALGCTIIWRAAGALFGPPAAGDYQGRFPMLFSQHTRLVHVDSPLGPEVLQLQRLEGREELGRLFSHELELVSSNPALPLDALLGKPMSLALELPGGSRRYFHGIVARCSQGAGAGQFASYQVTLRPWLWLLTRTSDCRIFQNQKVPDIIKQVFRDLGFSDFEDALSRSYREWEYCVQYRETSFDFVSRLMEQEGIYYWFRHEKKRHILVLSDAYGAHHSPAGYTSVPYYPPSLGHRERDHFFDWHMAREVQPGSLSLNDYDFQRPGTRLEVRSNVGRAHAAADYPLYDYPGEYVQSQDGEHYARTRIEAIQTQYERVRLRGCARGIGAGHLFHLSNYPRLDQNREYLVVGAEYRVVQELYETGNGGGGAQFESELDCIDAGQAFRPLPSTPVPVVRGPQTAVVVGPKGEEIWTDQYGRVKVHFHWDRHDQSNENSSCWMRVSQAWAGKNWGSIQIPRIGQEVIVSFLEGDPDRPIITGRVYNAEQTVPYELPANATQSGTKSRSSKGGTPANFNEIRMEDKKGAEQLFIHAERNQDIEVENDESHWVGHDRTKTIDHDETVHVKHDRTETVDNNETITVHANRSKTVDRNETVRIGMNKTETILMASLQNVGMGRMENVGLGYSLNVGMMMNTVVGLNQSTQVMKKKTLSVGDSYEVSVGGSDDGSKITLDGQSITLGSQRIELTADREILLRCGQSTIRLTPGEIEILSPNVDINC.

The tract at residues 502 to 522 is disordered; it reads ANATQSGTKSRSSKGGTPANF. Over residues 507-518 the composition is skewed to low complexity; it reads SGTKSRSSKGGT.

It belongs to the VgrG protein family. Forms homomultimers. Part of the type VI secretion system (T6SS).

It localises to the secreted. Its function is as follows. Part of the H1 type VI secretion system (H1-T6SS) specialized secretion system, which delivers several virulence factors in both prokaryotic and eukaryotic cells during infection. Allows the delivery of the Tse5/RhsP1 toxin to target cells where it exerts its toxicity. This chain is Type VI secretion system spike protein VgrG1c, found in Pseudomonas aeruginosa (strain ATCC 15692 / DSM 22644 / CIP 104116 / JCM 14847 / LMG 12228 / 1C / PRS 101 / PAO1).